A 588-amino-acid polypeptide reads, in one-letter code: Pescadillo homolog (588 aa).

Positions Met-1–Val-54 are required for 28S ribosomal RNA processing. The interval Met-1–Glu-257 is sufficient for nucleolar localization. N6-acetyllysine is present on Lys-98. A disordered region spans residues Glu-294–Arg-314. Positions Met-306–Ser-415 are sufficient for interaction with MAP1B. Residues Lys-322–Ser-415 enclose the BRCT domain. A disordered region spans residues Gly-448–Thr-515. Residues Glu-456 to Ala-486 show a composition bias toward acidic residues. The span at Gly-487–Lys-508 shows a compositional bias: basic and acidic residues. Lys-517 is covalently cross-linked (Glycyl lysine isopeptide (Lys-Gly) (interchain with G-Cter in SUMO1); alternate). A Glycyl lysine isopeptide (Lys-Gly) (interchain with G-Cter in SUMO2); alternate cross-link involves residue Lys-517. The required for 28S ribosomal RNA processing stretch occupies residues Met-539 to Glu-588. The interval Leu-565–Glu-588 is disordered.

Belongs to the pescadillo family. As to quaternary structure, component of the PeBoW complex, composed of BOP1, PES1 and WDR12. The complex is held together by BOP1, which interacts with PES1 via its N-terminal domain and with WDR12 via a high-affinity interaction between the seven-bladed beta-propeller domains of the 2 proteins. The PeBoW complex associates with the 66S pre-ribosome. The PeBoW complex also associates with DDX27, PES1 interacts directly with DDX27. Interacts with IRS1 and UBTF. May interact with MAP1B. Sumoylated. In terms of tissue distribution, significant levels are detected in a variety of cancer cell lines, including glioblastoma, breast carcinoma, colon carcinoma and cervical carcinoma cells. Levels are abnormally elevated in malignant tumors of astrocytic origin.

The protein localises to the nucleus. Its subcellular location is the nucleolus. It is found in the nucleoplasm. It localises to the chromosome. In terms of biological role, component of the PeBoW complex, which is required for maturation of 28S and 5.8S ribosomal RNAs and formation of the 60S ribosome. This Homo sapiens (Human) protein is Pescadillo homolog.